Consider the following 488-residue polypeptide: MKAIMVVGTTSHAGKSLITTAICRILSRRGWKVTPFKGQNMALNSYVTSTGGEMGHAQAVQAWAAGVTPAIEMNPILLKPQGDMTSQVIIKGKASGTVGAVDYYQQYFDIGWNAIQESLETLSQEFNMIVCEGAGSPAEINLKHRDLTNMRVAKHLNASTILVVDIDRGGAFAHIIGTLELLEPEERNLIKGIVINKFRGQRSLLDSGIHWLEKKTNIPVIGVIPWINEAFPAEDSLSILEQRYNKHTTDITIAIIRLPRISNFTDFEPLEAESSVKIKYIHPNDSLGDPDAIIIPGTKTTINDLLVLQKSGMAEAIKSYQSSGGIVMGICGGFQMLGEVLIDSQGLEGKQGEYKGLELLPLITTITPKKIASQRQVIANYPLGNLPVIGYEIHQGRTIVTKPDIVKPLFNDYDLGFVDSYDSIWGNYLHGIFDNGSWRRSWLNILRHKRGLNSLPTSISNYREQREIILDSIADKVNEHLDLKPVLT.

The GATase cobBQ-type domain maps to 250–438 (DITIAIIRLP…LHGIFDNGSW (189 aa)). The Nucleophile role is filled by Cys-331. The active site involves His-430.

It belongs to the CobB/CobQ family. CobQ subfamily.

The protein operates within cofactor biosynthesis; adenosylcobalamin biosynthesis. Catalyzes amidations at positions B, D, E, and G on adenosylcobyrinic A,C-diamide. NH(2) groups are provided by glutamine, and one molecule of ATP is hydrogenolyzed for each amidation. This Trichodesmium erythraeum (strain IMS101) protein is Cobyric acid synthase.